Reading from the N-terminus, the 241-residue chain is uncharacterized protein (241 aa).

This is an uncharacterized protein from Pasteurella multocida (strain Pm70).